We begin with the raw amino-acid sequence, 196 residues long: ATP-dependent Clp protease proteolytic subunit (196 aa).

The active-site Nucleophile is Ser-98. His-123 is an active-site residue.

The protein belongs to the peptidase S14 family. As to quaternary structure, fourteen ClpP subunits assemble into 2 heptameric rings which stack back to back to give a disk-like structure with a central cavity, resembling the structure of eukaryotic proteasomes.

The protein localises to the cytoplasm. It carries out the reaction Hydrolysis of proteins to small peptides in the presence of ATP and magnesium. alpha-casein is the usual test substrate. In the absence of ATP, only oligopeptides shorter than five residues are hydrolyzed (such as succinyl-Leu-Tyr-|-NHMec, and Leu-Tyr-Leu-|-Tyr-Trp, in which cleavage of the -Tyr-|-Leu- and -Tyr-|-Trp bonds also occurs).. In terms of biological role, cleaves peptides in various proteins in a process that requires ATP hydrolysis. Has a chymotrypsin-like activity. Plays a major role in the degradation of misfolded proteins. This chain is ATP-dependent Clp protease proteolytic subunit, found in Actinobacillus pleuropneumoniae serotype 5b (strain L20).